The chain runs to 460 residues: MKIKEQFFFKQEASKNKIHFISLGCSRNLVDTEVMLGILLKSGYEATESLEEADYLILNTCAFLKAARDESTDYLQRIIKAKKETAKIILTGCMVSKHKEELKPLLPHIHYVLGSGDVEHILSAIESKEYGEKISSKSYLEMGEIPRKLSTPKHYAYLKIAEGCRKRCAFCIIPTIKGALRSKPLDQIIKEFRLLLKMGVKEIILIAQDLGDYGKDFSADRKSCLDKVLKEMLKEPGDYWIRMLYLYPDEVDDTIIDLMESDHRLLPYVDIPLQHINNRVLKKMLRTTSKEQILDLLTKLRTRIPHIYIRSSFIVGFPGETDDEFQDLVDFVREGWIDNLGIFSYSQEEGSVAADMPDQVSQSVKSKRLKILSQAQKQNVEKHNQKLVGQVVEAVIDGYHPDSELLLTARFYGQAPEVDPCIIVNEARLVSGFGERYLIEITGYVGYDLIGRVVKKAPGE.

The MTTase N-terminal domain maps to Asn16 to Tyr130. [4Fe-4S] cluster-binding residues include Cys25, Cys61, Cys93, Cys164, Cys168, and Cys171. In terms of domain architecture, Radical SAM core spans Ser150 to Lys382. Residues Gln385–Lys455 enclose the TRAM domain.

Belongs to the methylthiotransferase family. RimO subfamily. [4Fe-4S] cluster serves as cofactor.

The protein localises to the cytoplasm. It carries out the reaction L-aspartate(89)-[ribosomal protein uS12]-hydrogen + (sulfur carrier)-SH + AH2 + 2 S-adenosyl-L-methionine = 3-methylsulfanyl-L-aspartate(89)-[ribosomal protein uS12]-hydrogen + (sulfur carrier)-H + 5'-deoxyadenosine + L-methionine + A + S-adenosyl-L-homocysteine + 2 H(+). Catalyzes the methylthiolation of an aspartic acid residue of ribosomal protein uS12. This Chlamydia felis (strain Fe/C-56) (Chlamydophila felis) protein is Ribosomal protein uS12 methylthiotransferase RimO.